The chain runs to 204 residues: FMN-dependent NADH:quinone oxidoreductase (204 aa).

FMN is bound by residues Ser9, 15–17, 95–98, and 139–142; these read SVS, MYNF, and SRGG.

This sequence belongs to the azoreductase type 1 family. Homodimer. Requires FMN as cofactor.

The enzyme catalyses 2 a quinone + NADH + H(+) = 2 a 1,4-benzosemiquinone + NAD(+). It catalyses the reaction N,N-dimethyl-1,4-phenylenediamine + anthranilate + 2 NAD(+) = 2-(4-dimethylaminophenyl)diazenylbenzoate + 2 NADH + 2 H(+). Functionally, quinone reductase that provides resistance to thiol-specific stress caused by electrophilic quinones. In terms of biological role, also exhibits azoreductase activity. Catalyzes the reductive cleavage of the azo bond in aromatic azo compounds to the corresponding amines. The sequence is that of FMN-dependent NADH:quinone oxidoreductase from Methylocella silvestris (strain DSM 15510 / CIP 108128 / LMG 27833 / NCIMB 13906 / BL2).